A 32-amino-acid chain; its full sequence is C-reactive protein (32 aa).

A Pentraxin (PTX) domain is found at 2–32 (VIKTLVFQSESNNSFVELIPMKPLNLRAFXL).

Belongs to the pentraxin family. In terms of assembly, homopentamer. Pentraxin (or pentaxin) have a discoid arrangement of 5 non-covalently bound subunits. In terms of processing, glycosylated.

It is found in the secreted. Its function is as follows. Displays several functions associated with host defense: it promotes agglutination, bacterial capsular swelling, phagocytosis, and complement fixation through its calcium-dependent binding to phosphorylcholine. This is C-reactive protein from Pleuronectes platessa (European plaice).